A 372-amino-acid chain; its full sequence is Fatty acid 2-hydroxylase (372 aa).

The 79-residue stretch at 8–86 (AASFSPSEVQ…LEQYYVGELR (79 aa)) folds into the Cytochrome b5 heme-binding domain. Positions 43 and 69 each coordinate heme. 2 helical membrane passes run 168–188 (VWYSVPIIWVPLVLYLSWSYY) and 213–233 (SMFPGLFMLGIFLWSLIEYLI). The region spanning 219 to 361 (FMLGIFLWSL…TKLWDYCFHT (143 aa)) is the Fatty acid hydroxylase domain. Zn(2+) is bound by residues H234, H239, H257, H260, and H261. A run of 2 helical transmembrane segments spans residues 271 to 291 (VFPPVPASLVIGVFYLCLQLI) and 292 to 312 (LPEAVGGTVFAGGLLGYVLYD). 5 residues coordinate Zn(2+): H315, H319, H336, H339, and H340.

It belongs to the sterol desaturase family. SCS7 subfamily. Zn(2+) serves as cofactor.

It localises to the endoplasmic reticulum membrane. The protein localises to the microsome membrane. It catalyses the reaction a 1,2-saturated fatty acid + 2 Fe(II)-[cytochrome b5] + O2 + 2 H(+) = a (R)-2-hydroxy fatty acid + 2 Fe(III)-[cytochrome b5] + H2O. The catalysed reaction is hexadecanoate + 2 Fe(II)-[cytochrome b5] + O2 + 2 H(+) = (R)-2-hydroxyhexadecanoate + 2 Fe(III)-[cytochrome b5] + H2O. The enzyme catalyses octadecanoate + 2 Fe(II)-[cytochrome b5] + O2 + 2 H(+) = (R)-2-hydroxyoctadecanoate + 2 Fe(III)-[cytochrome b5] + H2O. It carries out the reaction docosanoate + 2 Fe(II)-[cytochrome b5] + O2 + 2 H(+) = 2-hydroxydocosanoate + 2 Fe(III)-[cytochrome b5] + H2O. It catalyses the reaction tetracosanoate + 2 Fe(II)-[cytochrome b5] + O2 + 2 H(+) = (R)-2-hydroxytetracosanoate + 2 Fe(III)-[cytochrome b5] + H2O. The protein operates within lipid metabolism; fatty acid metabolism. It participates in sphingolipid metabolism; galactosylceramide biosynthesis. Functionally, catalyzes the hydroxylation of free fatty acids at the C-2 position to produce 2-hydroxy fatty acids, which are building blocks of sphingolipids and glycosphingolipids common in neural tissue and epidermis. FA2H is stereospecific for the production of (R)-2-hydroxy fatty acids. Plays an essential role in the synthesis of galactosphingolipids of the myelin sheath. Responsible for the synthesis of sphingolipids and glycosphingolipids involved in the formation of epidermal lamellar bodies critical for skin permeability barrier. Participates in the synthesis of glycosphingolipids and a fraction of type II wax diesters in sebaceous gland, specifically regulating hair follicle homeostasis. Involved in the synthesis of sphingolipids of plasma membrane rafts, controlling lipid raft mobility and trafficking of raft-associated proteins. The sequence is that of Fatty acid 2-hydroxylase (FA2H) from Macaca fascicularis (Crab-eating macaque).